Reading from the N-terminus, the 522-residue chain is Calcium-dependent protein kinase 4 (522 aa).

The segment covering 1 to 10 (MGACFSSHTA) has biased composition (polar residues). The disordered stretch occupies residues 1 to 43 (MGACFSSHTATAAADGGSGKRQQRKGDHKGKLPDGGGGEKEKE). A lipid anchor (N-myristoyl glycine) is attached at glycine 2. Residues 29–43 (KGKLPDGGGGEKEKE) are compositionally biased toward basic and acidic residues. The Protein kinase domain maps to 59 to 319 (YQVGRLLGHG…AAQALSHPWV (261 aa)). Residues 65 to 73 (LGHGQFGYT) and lysine 88 each bind ATP. Aspartate 185 acts as the Proton acceptor in catalysis. The interval 325–355 (ASEIPVDISVLSNMRQFVKYSRFKQFALRAL) is autoinhibitory domain. EF-hand domains are found at residues 362–397 (EELA…DLPW), 399–434 (LKGP…IHQM), 441–476 (RWGL…GLKG), and 481–508 (LLEE…ASMS). Ca(2+) is bound by residues aspartate 375, aspartate 377, serine 379, serine 381, glutamate 386, aspartate 412, asparagine 414, aspartate 416, glutamate 423, aspartate 454, aspartate 456, aspartate 458, tyrosine 460, glutamate 465, aspartate 486, aspartate 488, aspartate 490, arginine 492, and glutamate 497.

Belongs to the protein kinase superfamily. Ser/Thr protein kinase family. CDPK subfamily.

The protein localises to the membrane. It catalyses the reaction L-seryl-[protein] + ATP = O-phospho-L-seryl-[protein] + ADP + H(+). The enzyme catalyses L-threonyl-[protein] + ATP = O-phospho-L-threonyl-[protein] + ADP + H(+). Its activity is regulated as follows. Activated by calcium. Autophosphorylation may play an important role in the regulation of the kinase activity. Its function is as follows. May play a role in signal transduction pathways that involve calcium as a second messenger. This is Calcium-dependent protein kinase 4 from Oryza sativa subsp. japonica (Rice).